The following is a 367-amino-acid chain: Carbamoyl-phosphate synthase (367 aa).

The ATP-grasp domain occupies 111–296 (KEFYNEIGVP…SLCELVNMAA (186 aa)). 137-186 (KMEFPVVLKQGQGQGGKDIKVAESLDDVKEYFEEFDHALCEKFIEGSEIS) serves as a coordination point for ATP. Mg(2+) contacts are provided by Asp-253, Glu-267, and Asn-269. 3 residues coordinate Mn(2+): Asp-253, Glu-267, and Asn-269.

It belongs to the small carbamoyl-phosphate synthase family. As to quaternary structure, forms homodimers and homotetramers (dimers of dimers). Mg(2+) serves as cofactor. Requires Mn(2+) as cofactor.

The catalysed reaction is hydrogencarbonate + NH4(+) + 2 ATP = carbamoyl phosphate + 2 ADP + phosphate + 2 H(+). Functionally, catalyzes the synthesis of carbamoyl phosphate from ATP, ammonium and bicarbonate. Proceeds via a three-step mechanism, i.e. the phosphorylation of hydrogencarbonate to carboxyphosphate, a nucleophilic attack of ammonia on carboxyphosphate yielding carbamate, and the phosphorylation of carbamate forming carbamoyl phosphate. In M.smithii, the predominant archaeon in the human gut, one function of this enzyme may be to sequester ammonia, a scarce nutrient in the intestine which is the major source of nitrogen in M.smithii for the biosynthesis of nucleotides, amino acids, and many other metabolites. The chain is Carbamoyl-phosphate synthase from Methanobrevibacter smithii (strain ATCC 35061 / DSM 861 / OCM 144 / PS).